Consider the following 157-residue polypeptide: MPPEYPEPLSIEHDHPSRELDAGTLRYVIQHVVDAEGTSLTHLSLVLTDHDTVRRLNQSYLDHDYDTDVLSFSLREGPAPSSGASGEGIEGEVYVDLDTAAERHDEFDTSFEREAYRYVVHGLLHLVGYDDAQPAGQDKMREKEDQYLNAVLPAPSS.

Zn(2+)-binding residues include His121, His125, and Asp131.

Belongs to the endoribonuclease YbeY family. It depends on Zn(2+) as a cofactor.

The protein localises to the cytoplasm. Single strand-specific metallo-endoribonuclease involved in late-stage 70S ribosome quality control and in maturation of the 3' terminus of the 16S rRNA. The sequence is that of Endoribonuclease YbeY from Salinibacter ruber (strain DSM 13855 / M31).